The primary structure comprises 629 residues: Long-chain-fatty-acid--AMP ligase FadD32 (629 aa).

Residues 186 to 191 (TSGSTR), Ser341, Ala345, Asp468, and Arg482 each bind ATP.

It belongs to the ATP-dependent AMP-binding enzyme family. In terms of assembly, monomer.

It catalyses the reaction a long-chain fatty acid + holo-[ACP] + ATP = a long-chain fatty acyl-[ACP] + AMP + diphosphate. The catalysed reaction is dodecanoate + ATP + H(+) = dodecanoyl-AMP + diphosphate. The enzyme catalyses tetradecanoate + ATP + H(+) = tetradecanoyl-AMP + diphosphate. It participates in lipid metabolism; mycolic acid biosynthesis. Its activity is regulated as follows. The acyl-AMP ligase activity is inhibited by the alkylphosphate esters of AMP, adenosine 50-dodecylphosphate (AMPC12) and eicosyl-AMP (AMPC20). In terms of biological role, involved in the biosynthesis of mycolic acids. Catalyzes the activation of long-chain fatty acids as acyl-adenylates (acyl-AMP), which are then transferred to the phosphopantetheine arm of the polyketide synthase Pks13 for further chain extension. Can use dodecanoate (C12) and tetradecanoate (C14). The protein is Long-chain-fatty-acid--AMP ligase FadD32 (fadD32) of Mycobacterium marinum (strain ATCC BAA-535 / M).